Here is a 151-residue protein sequence, read N- to C-terminus: Ribosome maturation factor RimP (151 aa).

Belongs to the RimP family.

The protein resides in the cytoplasm. In terms of biological role, required for maturation of 30S ribosomal subunits. This Vibrio parahaemolyticus serotype O3:K6 (strain RIMD 2210633) protein is Ribosome maturation factor RimP.